The primary structure comprises 461 residues: Argininosuccinate lyase (461 aa).

Positions 28, 115, and 160 each coordinate 2-(N(omega)-L-arginino)succinate. The Proton acceptor role is filled by histidine 161. The Proton donor role is filled by serine 282. 4 residues coordinate 2-(N(omega)-L-arginino)succinate: asparagine 290, tyrosine 322, glutamine 327, and lysine 330.

Belongs to the lyase 1 family. Argininosuccinate lyase subfamily. As to quaternary structure, homotetramer.

It carries out the reaction 2-(N(omega)-L-arginino)succinate = fumarate + L-arginine. The protein operates within amino-acid biosynthesis; L-arginine biosynthesis; L-arginine from L-ornithine and carbamoyl phosphate: step 3/3. This is Argininosuccinate lyase (arg7) from Schizosaccharomyces pombe (strain 972 / ATCC 24843) (Fission yeast).